The sequence spans 443 residues: Flavastacin (443 aa).

The first 15 residues, 1–15, serve as a signal peptide directing secretion; it reads MTRKLLILSGCLILA. The propeptide at 16-91 is activation peptide; the sequence is LNSCKSDMET…ANPDISTVER (76 aa). The 198-residue stretch at 92–289 folds into the Peptidase M12A domain; that stretch reads STIVSSFIKT…AGINHLYGPV (198 aa). H189 provides a ligand contact to Zn(2+). E190 is an active-site residue. Positions 193 and 199 each coordinate Zn(2+). The Ricin B-type lectin domain maps to 297-440; the sequence is GTYTLTTSLA…PYTKQRFTLT (144 aa). Residue S355 is glycosylated (O-linked (Man...) serine).

Zn(2+) serves as cofactor. Post-translationally, O-linked glycan consists of the Man, GlcNAc, GlcU, Glc, GlcU, Rha, Man heptasaccharide.

It catalyses the reaction Hydrolyzes polypeptides on the amino-side of Asp in -Xaa-|-Asp-. Acts very slowly on -Xaa-|-Glu.. Its function is as follows. Zinc metallendopeptidase that cleaves preferentially on N-terminal side of aspartate-containing substrates. The protein is Flavastacin of Elizabethkingia meningoseptica (Chryseobacterium meningosepticum).